Reading from the N-terminus, the 213-residue chain is Large ribosomal subunit protein uL3 (213 aa).

This sequence belongs to the universal ribosomal protein uL3 family. As to quaternary structure, part of the 50S ribosomal subunit. Forms a cluster with proteins L14 and L19.

Functionally, one of the primary rRNA binding proteins, it binds directly near the 3'-end of the 23S rRNA, where it nucleates assembly of the 50S subunit. The protein is Large ribosomal subunit protein uL3 of Bifidobacterium longum (strain DJO10A).